Consider the following 224-residue polypeptide: Peroxiredoxin-6 (224 aa).

One can recognise a Thioredoxin domain in the interval 5 to 169 (LLLGDEAPNF…ILRVIISLQL (165 aa)). The tract at residues 31 to 40 (DSWGILFSHP) is required and sufficient for targeting to lysosomes and lamellar bodies. T44 carries the post-translational modification Phosphothreonine. C47 serves as the catalytic Cysteine sulfenic acid (-SOH) intermediate; for peroxidase activity. N6-acetyllysine is present on K63. At Y89 the chain carries Phosphotyrosine. D140 serves as the catalytic For phospholipase activity. Residue T177 is modified to Phosphothreonine; by MAPK. N6-acetyllysine; alternate is present on K209. K209 is modified (N6-succinyllysine; alternate).

Belongs to the peroxiredoxin family. Prx6 subfamily. In terms of assembly, homodimer. Interacts with GSTP1; mediates PRDX6 glutathionylation and regeneration. Interacts with APEX1. Interacts with STH. May interact with FAM168B. May interact with HTR2A. The cofactor is Does not need Ca(2+) as cofactor.. Post-translationally, irreversibly inactivated by overoxidation of Cys-47 to sulfinic acid (Cys-SO(2)H) and sulfonic acid (Cys-SO(3)H) forms upon oxidative stress. Phosphorylation at Thr-177 by MAP kinases increases the phospholipase activity of the enzyme. The phosphorylated form exhibits a greater lysophosphatidylcholine acyltransferase activity compared to the non-phosphorylated form.

The protein localises to the cytoplasm. The protein resides in the lysosome. The catalysed reaction is a hydroperoxide + 2 glutathione = an alcohol + glutathione disulfide + H2O. The enzyme catalyses a 1,2-diacyl-sn-glycero-3-phosphocholine + H2O = a 1-acyl-sn-glycero-3-phosphocholine + a fatty acid + H(+). It catalyses the reaction a 1-acyl-sn-glycero-3-phosphocholine + an acyl-CoA = a 1,2-diacyl-sn-glycero-3-phosphocholine + CoA. It carries out the reaction 1-hexadecanoyl-sn-glycero-3-phosphocholine + hexadecanoyl-CoA = 1,2-dihexadecanoyl-sn-glycero-3-phosphocholine + CoA. The catalysed reaction is 1,2-dihexadecanoyl-sn-glycero-3-phosphocholine + H2O = 1-hexadecanoyl-sn-glycero-3-phosphocholine + hexadecanoate + H(+). Thiol-specific peroxidase that catalyzes the reduction of hydrogen peroxide and organic hydroperoxides to water and alcohols, respectively. Can reduce H(2)O(2) and short chain organic, fatty acid, and phospholipid hydroperoxides. Also has phospholipase activity, and can therefore either reduce the oxidized sn-2 fatty acyl group of phospholipids (peroxidase activity) or hydrolyze the sn-2 ester bond of phospholipids (phospholipase activity). These activities are dependent on binding to phospholipids at acidic pH and to oxidized phospholipds at cytosolic pH. Plays a role in cell protection against oxidative stress by detoxifying peroxides and in phospholipid homeostasis. Exhibits acyl-CoA-dependent lysophospholipid acyltransferase which mediates the conversion of lysophosphatidylcholine (1-acyl-sn-glycero-3-phosphocholine or LPC) into phosphatidylcholine (1,2-diacyl-sn-glycero-3-phosphocholine or PC). Shows a clear preference for LPC as the lysophospholipid and for palmitoyl CoA as the fatty acyl substrate. In Bos taurus (Bovine), this protein is Peroxiredoxin-6 (PRDX6).